We begin with the raw amino-acid sequence, 187 residues long: Large ribosomal subunit protein uL6 (187 aa).

This sequence belongs to the universal ribosomal protein uL6 family. In terms of assembly, part of the 50S ribosomal subunit.

Its function is as follows. This protein binds to the 23S rRNA, and is important in its secondary structure. It is located near the subunit interface in the base of the L7/L12 stalk, and near the tRNA binding site of the peptidyltransferase center. The polypeptide is Large ribosomal subunit protein uL6 (Roseiflexus sp. (strain RS-1)).